The following is a 370-amino-acid chain: DNA-directed RNA polymerase II subunit GRINL1A (370 aa).

The tract at residues 1–20 (MSSLPRGFEPQTPEDLGQRS) is disordered. The stretch at 15–69 (DLGQRSLAELREMLKRQERLLRNVKFICKLPDKGKKISDAVTKLKAAIAEREEVR) forms a coiled coil. An important for transcription repressor activity region spans residues 29–68 (KRQERLLRNVKFICKLPDKGKKISDAVTKLKAAIAEREEV). Disordered stretches follow at residues 93–172 (DGDR…ASEG), 204–226 (DPTE…WSGP), and 241–283 (KNPM…RRDR). Over residues 101–131 (NSDQILDTSSPVPGCSSVANITSSQTTSRQQ) the composition is skewed to polar residues. Residues 138–152 (RGGDAEAAEAEHTVS) show a composition bias toward basic and acidic residues. Low complexity predominate over residues 155 to 170 (PTSSSGAPAPSSSQAS). Residues 205–214 (PTEHHSEGNR) show a composition bias toward basic and acidic residues. The interval 228–299 (KKPHYMEVLE…TAARLLPLHH (72 aa)) is interaction with Pol II. A compositionally biased stretch (polar residues) spans 254 to 266 (VLPSQPRDSSSAC). The residue at position 271 (Ser271) is a Phosphoserine. Residues 300–315 (LPTQLLSIEESLALQR) form an important for transcription repressor activity region. Residues 303-328 (QLLSIEESLALQRQQKQSYEEIQAKL) are a coiled coil. The segment at 316–341 (QQKQSYEEIQAKLAAQKLAERLNIKM) is interaction with Pol II. Residues 340–370 (KMQSYNPEGESSRKYREVRDEDDDQSSEDEF) are disordered. Residues 349–358 (ESSRKYREVR) show a composition bias toward basic and acidic residues. The segment covering 359–370 (DEDDDQSSEDEF) has biased composition (acidic residues).

It belongs to the GRINL1 family. As to quaternary structure, component of the Pol II(G) complex, which contains the RNA polymerase II (Pol II) core complex subunits and POLR2M and appears to be an abundant form of Pol II. Dephosphorylated at Ser-271 by the PNUTS-PP1 complex, promoting RNA polymerase II transcription pause-release.

It localises to the nucleus. Functionally, appears to be a stable component of the Pol II(G) complex form of RNA polymerase II (Pol II). Pol II synthesizes mRNA precursors and many functional non-coding RNAs and is the central component of the basal RNA polymerase II transcription machinery. May play a role in Mediator complex-dependent regulation of transcription activation. Acts in vitro as a negative regulator of transcriptional activation; this repression is relieved by the Mediator complex, which restores Pol II(G) activator-dependent transcription to a level equivalent to that of Pol II. The chain is DNA-directed RNA polymerase II subunit GRINL1A (POLR2M) from Bos taurus (Bovine).